The following is a 1230-amino-acid chain: Formin-like protein 14 (1230 aa).

One can recognise a Phosphatase tensin-type domain in the interval 1-194; sequence MSLLSRFFYK…QYVARRNINS (194 aa). The active-site Phosphocysteine intermediate is the Cys127. The 140-residue stretch at 200 to 339 folds into the C2 tensin-type domain; it reads ERALSLDCVI…FRAEVLFGEV (140 aa). Disordered stretches follow at residues 412–432, 460–822, and 1187–1230; these read FNSPDSEEETNTSSAADSSDE, HESS…LKPL, and ENEK…RHRT. Residues 484–496 show a composition bias toward low complexity; sequence DNPLNLPSDPPSS. 4 stretches are compositionally biased toward pro residues: residues 503-514, 524-535, 545-556, and 566-575; these read LPPPPPPPPPPL, SQPPPPPPPPPL, and SQPPPPPPLP. Polar residues predominate over residues 579–591; the sequence is NRDPLTTLHQPIN. Pro residues-rich tracts occupy residues 592–630, 637–649, 660–672, 679–688, 699–711, 718–728, and 735–766; these read KTPPPPPPPPPPLPSRSIPPPLAQPPPPRPPPPPPPPPS, PSAPPPPPPPPPS, QPPPPPPPPPPTR, APPPPPPPPT, PSTPPPPPPPPPK, PKPPAPPPLPP, and APPPPPPPPLSKTPAPPPPPLSKTPVPPPPPG. Residues 809 to 1207 enclose the FH2 domain; the sequence is VPTAAPKKTA…KLEKEAIKEK (399 aa). Positions 1187 to 1215 are enriched in basic and acidic residues; sequence ENEKQAEAEKKKLEKEAIKEKSATKKDGV.

This sequence belongs to the formin-like family. Class-II subfamily.

This is Formin-like protein 14 (FH14) from Arabidopsis thaliana (Mouse-ear cress).